The sequence spans 386 residues: Lipoyl synthase, mitochondrial (386 aa).

The N-terminal 21 residues, 1 to 21 (MISRNSILLRRLYPTTIIRTL), are a transit peptide targeting the mitochondrion. Cys-107, Cys-112, Cys-118, Cys-137, Cys-141, Cys-144, and Ser-352 together coordinate [4Fe-4S] cluster. The Radical SAM core domain occupies 122–341 (KKSEATATIM…RDTALDMGFL (220 aa)).

This sequence belongs to the radical SAM superfamily. Lipoyl synthase family. [4Fe-4S] cluster is required as a cofactor.

It is found in the mitochondrion. It carries out the reaction [[Fe-S] cluster scaffold protein carrying a second [4Fe-4S](2+) cluster] + N(6)-octanoyl-L-lysyl-[protein] + 2 oxidized [2Fe-2S]-[ferredoxin] + 2 S-adenosyl-L-methionine + 4 H(+) = [[Fe-S] cluster scaffold protein] + N(6)-[(R)-dihydrolipoyl]-L-lysyl-[protein] + 4 Fe(3+) + 2 hydrogen sulfide + 2 5'-deoxyadenosine + 2 L-methionine + 2 reduced [2Fe-2S]-[ferredoxin]. Its pathway is protein modification; protein lipoylation via endogenous pathway; protein N(6)-(lipoyl)lysine from octanoyl-[acyl-carrier-protein]: step 2/2. Its function is as follows. Catalyzes the radical-mediated insertion of two sulfur atoms into the C-6 and C-8 positions of the octanoyl moiety bound to the lipoyl domains of lipoate-dependent enzymes, thereby converting the octanoylated domains into lipoylated derivatives. The polypeptide is Lipoyl synthase, mitochondrial (LAB5) (Candida albicans (strain SC5314 / ATCC MYA-2876) (Yeast)).